The primary structure comprises 220 residues: Uracil-DNA glycosylase (220 aa).

The active-site Proton acceptor is the Asp65.

Belongs to the uracil-DNA glycosylase (UDG) superfamily. UNG family.

It localises to the cytoplasm. The enzyme catalyses Hydrolyzes single-stranded DNA or mismatched double-stranded DNA and polynucleotides, releasing free uracil.. Functionally, excises uracil residues from the DNA which can arise as a result of misincorporation of dUMP residues by DNA polymerase or due to deamination of cytosine. This Bacteroides thetaiotaomicron (strain ATCC 29148 / DSM 2079 / JCM 5827 / CCUG 10774 / NCTC 10582 / VPI-5482 / E50) protein is Uracil-DNA glycosylase.